Reading from the N-terminus, the 629-residue chain is Methyl-accepting chemotaxis protein PctB (629 aa).

Residues 1 to 10 (MIKSLKFSHK) lie on the Cytoplasmic side of the membrane. The helical transmembrane segment at 11–31 (ILLAAALVVIATFSLFTLYND) threads the bilayer. Over 32–276 (SLQRASIRED…AYAMLTKLRT (245 aa)) the chain is Periplasmic. Residues 37 to 260 (SIREDLEDYL…LSGLDWYIGI (224 aa)) enclose the Cache domain. L-arginine contacts are provided by residues Tyr-109, Ser-115, Tyr-121, 126–128 (RPW), Glu-146, and Asp-173. L-glutamine contacts are provided by residues Ser-115, Tyr-121, 126-128 (RPW), 144-146 (YME), and Asp-173. A helical transmembrane segment spans residues 277 to 297 (SAIVAALIAVVAIVLLLGMLI). Positions 298-352 (RVLMQPLTDMGRAMQDIAQGEGDLTKRLKVTSNDEFGALAISFNRFVERIHESIR) constitute an HAMP domain. The Cytoplasmic portion of the chain corresponds to 298-629 (RVLMQPLTDM…LRQLVDSFKI (332 aa)). The Methyl-accepting transducer domain occupies 357–593 (TARQLHDVAQ…SLNMDITEIN (237 aa)). Positions 405–424 (RNAADASHHASDANHQAEDG) are disordered. Residues 410–424 (ASHHASDANHQAEDG) are compositionally biased toward basic and acidic residues.

It belongs to the methyl-accepting chemotaxis (MCP) protein family. Monomer in the absence and presence of ligands.

It localises to the cell inner membrane. Functionally, chemotactic-signal transducers respond to changes in the concentration of attractants and repellents in the environment, transduce a signal from the outside to the inside of the cell, and facilitate sensory adaptation through the variation of the level of methylation. Responds to L-Arg, L-Gln, L-Ala, L-Glu, L-Lys, L-Met and L-Tyr. Also involved in repellent responses to trichloroethylene (TCE), chloroform and methylthiocyanate. This chain is Methyl-accepting chemotaxis protein PctB (pctB), found in Pseudomonas aeruginosa (strain ATCC 15692 / DSM 22644 / CIP 104116 / JCM 14847 / LMG 12228 / 1C / PRS 101 / PAO1).